We begin with the raw amino-acid sequence, 132 residues long: MALLLTTVIALTCLGGFASPGPVPPSTALRELIEELVNITQNQKAPLCNGSMVWSINLTAGVYCAALESLINVSGCSAIEKTQRMLSGFCPHKVSAGQFSSLHVRDTKIEVAQFVKDLLLHLKKLFREGRFN.

An N-terminal signal peptide occupies residues 1-18; it reads MALLLTTVIALTCLGGFA. N38, N49, N57, and N72 each carry an N-linked (GlcNAc...) asparagine glycan. Cystine bridges form between C48–C76 and C64–C90.

The protein belongs to the IL-4/IL-13 family. Interacts with IL13RA2.

The protein resides in the secreted. Cytokine that plays important roles in allergic inflammation and immune response to parasite infection. Synergizes with IL2 in regulating interferon-gamma synthesis. Stimulates B-cell proliferation, and activation of eosinophils, basophils, and mast cells. Plays an important role in controlling IL33 activity by modulating the production of transmembrane and soluble forms of interleukin-1 receptor-like 1/IL1RL1. Displays the capacity to antagonize Th1-driven proinflammatory immune response and downregulates synthesis of many proinflammatory cytokines including IL1, IL6, IL10, IL12 and TNF-alpha through a mechanism that partially involves suppression of NF-kappa-B. Also functions on nonhematopoietic cells, including endothelial cells where it induces vascular cell adhesion protein 1/VCAM1, which is important in the recruitment of eosinophils. Exerts its biological effects through its receptors which comprises the IL4R chain and the IL13RA1 chain, to activate JAK1 and TYK2, leading to the activation of STAT6. Aside from IL13RA1, another receptor IL13RA2 acts as a high affinity decoy for IL13 and mediates internalization and depletion of extracellular IL13. The sequence is that of Interleukin-13 (IL13) from Pan troglodytes (Chimpanzee).